Consider the following 226-residue polypeptide: Ribosomal RNA small subunit methyltransferase G (226 aa).

Residues G86, L91, 137-138 (VE), and R150 each bind S-adenosyl-L-methionine.

This sequence belongs to the methyltransferase superfamily. RNA methyltransferase RsmG family.

It localises to the cytoplasm. The catalysed reaction is guanosine(527) in 16S rRNA + S-adenosyl-L-methionine = N(7)-methylguanosine(527) in 16S rRNA + S-adenosyl-L-homocysteine. In terms of biological role, specifically methylates the N7 position of guanine in position 527 of 16S rRNA. The sequence is that of Ribosomal RNA small subunit methyltransferase G from Polaromonas sp. (strain JS666 / ATCC BAA-500).